The following is a 302-amino-acid chain: D-alanine--D-alanine ligase (302 aa).

Residues 104 to 296 (KLVFERFAIP…FPDLVTWLVE (193 aa)) enclose the ATP-grasp domain. 130–183 (AMARPYVVKPLDQGSSVGVTIVTSETNDLPFSRDDWPYGRQVMVERFIPGRELT) contributes to the ATP binding site. Residues D251, E263, and N265 each contribute to the Mg(2+) site.

This sequence belongs to the D-alanine--D-alanine ligase family. Mg(2+) serves as cofactor. Mn(2+) is required as a cofactor.

The protein localises to the cytoplasm. The enzyme catalyses 2 D-alanine + ATP = D-alanyl-D-alanine + ADP + phosphate + H(+). It functions in the pathway cell wall biogenesis; peptidoglycan biosynthesis. In terms of biological role, cell wall formation. The polypeptide is D-alanine--D-alanine ligase (Rhodospirillum rubrum (strain ATCC 11170 / ATH 1.1.1 / DSM 467 / LMG 4362 / NCIMB 8255 / S1)).